The primary structure comprises 390 residues: MVTVEEVRRAQRAEGPATVLAIGTATPANCVDQSTYPDYYFRITNSEHMTELKEKFKRMCDKSNIKRRYMHLTEEILKENPAMCEYMAPSLDARQDIVVVEVPRLGKEAAQKAIKEWGQPKSKITHLVFCTTSGVDMPGADYQLTKLLGLRPSVKRFMMYQQGCFAGGTVLRMAKDLAENNAGARVLVVCSEITAVTFRGPADTHLDSLVGQALFGDGAAAVIVGSDPVVGVERPLFQIVTAAQTLLPDSHGAIDGHLREVGLTFHLLKDVPGLISKNIEKSLKEAFDPLGISDWNSVFWIAHPGGPAILDQVEEKLGLKPEKLRSTRQVLSEYGNMSSACVLFILDEMRKSSAKEGMSTTGEGLDWGVLFGFGPGLTVETVVLHSVPLN.

The active site involves cysteine 164.

This sequence belongs to the thiolase-like superfamily. Chalcone/stilbene synthases family.

It carries out the reaction (E)-4-coumaroyl-CoA + 3 malonyl-CoA + 3 H(+) = 2',4,4',6'-tetrahydroxychalcone + 3 CO2 + 4 CoA. The protein operates within secondary metabolite biosynthesis; flavonoid biosynthesis. In terms of biological role, the primary product of this enzyme is 4,2',4',6'-tetrahydroxychalcone (also termed naringenin-chalcone or chalcone) which can under specific conditions spontaneously isomerize into naringenin. This Antirrhinum majus (Garden snapdragon) protein is Chalcone synthase (CHS).